Consider the following 814-residue polypeptide: Glycogen phosphorylase (814 aa).

Lysine 662 carries the N6-(pyridoxal phosphate)lysine modification.

Belongs to the glycogen phosphorylase family. Pyridoxal 5'-phosphate is required as a cofactor.

The enzyme catalyses [(1-&gt;4)-alpha-D-glucosyl](n) + phosphate = [(1-&gt;4)-alpha-D-glucosyl](n-1) + alpha-D-glucose 1-phosphate. Phosphorylase is an important allosteric enzyme in carbohydrate metabolism. Enzymes from different sources differ in their regulatory mechanisms and in their natural substrates. However, all known phosphorylases share catalytic and structural properties. This chain is Glycogen phosphorylase (glgP), found in Chlamydia trachomatis serovar D (strain ATCC VR-885 / DSM 19411 / UW-3/Cx).